Here is a 270-residue protein sequence, read N- to C-terminus: Tryptophan synthase alpha chain (270 aa).

Catalysis depends on proton acceptor residues glutamate 49 and aspartate 60.

The protein belongs to the TrpA family. In terms of assembly, tetramer of two alpha and two beta chains.

The catalysed reaction is (1S,2R)-1-C-(indol-3-yl)glycerol 3-phosphate + L-serine = D-glyceraldehyde 3-phosphate + L-tryptophan + H2O. Its pathway is amino-acid biosynthesis; L-tryptophan biosynthesis; L-tryptophan from chorismate: step 5/5. Functionally, the alpha subunit is responsible for the aldol cleavage of indoleglycerol phosphate to indole and glyceraldehyde 3-phosphate. This chain is Tryptophan synthase alpha chain, found in Pseudomonas fluorescens (strain Pf0-1).